The primary structure comprises 200 residues: MIPTVIEQSARGERAFDIYSRLLRDRIIFLGTQVDDDIANLIVAQMLYLESEDPEKDIYLYINSPGGSVYAGMAIYDTMQHIQPDVSTICIGLAASMGAFLLAGGTKGKRIALPHARIMIHQPLGGAQGPATDIEIQAKEILFIKNSLNSLLAYHTGQPLERIERDTDRDNFMTPEQAKEYGLIDQVISKRPQPTLAAVS.

The active-site Nucleophile is Ser-96. The active site involves His-121.

Belongs to the peptidase S14 family. As to quaternary structure, fourteen ClpP subunits assemble into 2 heptameric rings which stack back to back to give a disk-like structure with a central cavity, resembling the structure of eukaryotic proteasomes.

It is found in the cytoplasm. It catalyses the reaction Hydrolysis of proteins to small peptides in the presence of ATP and magnesium. alpha-casein is the usual test substrate. In the absence of ATP, only oligopeptides shorter than five residues are hydrolyzed (such as succinyl-Leu-Tyr-|-NHMec, and Leu-Tyr-Leu-|-Tyr-Trp, in which cleavage of the -Tyr-|-Leu- and -Tyr-|-Trp bonds also occurs).. Cleaves peptides in various proteins in a process that requires ATP hydrolysis. Has a chymotrypsin-like activity. Plays a major role in the degradation of misfolded proteins. The polypeptide is ATP-dependent Clp protease proteolytic subunit 2 (Synechococcus sp. (strain JA-2-3B'a(2-13)) (Cyanobacteria bacterium Yellowstone B-Prime)).